A 160-amino-acid chain; its full sequence is Small ribosomal subunit protein uS7 (160 aa).

Belongs to the universal ribosomal protein uS7 family. In terms of assembly, part of the 30S ribosomal subunit. Contacts proteins S9 and S11.

In terms of biological role, one of the primary rRNA binding proteins, it binds directly to 16S rRNA where it nucleates assembly of the head domain of the 30S subunit. Is located at the subunit interface close to the decoding center, probably blocks exit of the E-site tRNA. The chain is Small ribosomal subunit protein uS7 from Ehrlichia ruminantium (strain Gardel).